A 667-amino-acid polypeptide reads, in one-letter code: E3 ubiquitin-protein ligase Midline-1 (667 aa).

The RING-type zinc-finger motif lies at 10–60; the sequence is CPICLELFEDPLLLPCAHSLCFNCAHRILVSHCATNESVESITAFQCPTCR. A phosphoserine mark is found at S92 and S96. B box-type zinc fingers lie at residues 116-165 and 172-212; these read KVLC…IEPI and GLMC…VAAL. Residues C119, C122, C134, C137, C142, C145, H150, H159, C175, H178, C198, and H204 each coordinate Zn(2+). Positions 205–264 form a coiled coil; it reads RDHQVAALSERYDKLKQNLESNLTNLIKRNTELETLLAKLIQTCQHVEVNASRQEAKLTE. The region spanning 320-379 is the COS domain; it reads LKENDHARFLQTAKNITERVSMATASSQVLIPEINLNDTFDTFALDFSREKKLLECLDYL. One can recognise a Fibronectin type-III domain in the interval 381 to 484; sequence APNPPTIREE…EPGKLKTNSQ (104 aa). A compositionally biased stretch (polar residues) spans 471-485; the sequence is SRSSEPGKLKTNSQP. Residues 471 to 524 form a disordered region; it reads SRSSEPGKLKTNSQPFKLDPKSAHRKLKVSHDNLTVERDESSSKKSHTPERFTS. Residues 482 to 659 enclose the B30.2/SPRY domain; it reads NSQPFKLDPK…IITGLPIPDH (178 aa). A compositionally biased stretch (basic and acidic residues) spans 499–520; the sequence is VSHDNLTVERDESSSKKSHTPE. S511 carries the phosphoserine modification.

It belongs to the TRIM/RBCC family. As to quaternary structure, homodimer or heterodimer with MID2. Interacts with IGBP1. Interacts with TRIM16. In terms of processing, phosphorylated on serine and threonine residues. As to expression, in the fetus, highest expression found in kidney, followed by brain and lung. Expressed at low levels in fetal liver. In the adult, most abundant in heart, placenta and brain.

The protein resides in the cytoplasm. It localises to the cytoskeleton. It is found in the spindle. It carries out the reaction S-ubiquitinyl-[E2 ubiquitin-conjugating enzyme]-L-cysteine + [acceptor protein]-L-lysine = [E2 ubiquitin-conjugating enzyme]-L-cysteine + N(6)-ubiquitinyl-[acceptor protein]-L-lysine.. Functionally, has E3 ubiquitin ligase activity towards IGBP1, promoting its monoubiquitination, which results in deprotection of the catalytic subunit of protein phosphatase PP2A, and its subsequent degradation by polyubiquitination. This Homo sapiens (Human) protein is E3 ubiquitin-protein ligase Midline-1 (MID1).